Reading from the N-terminus, the 347-residue chain is METPNPLTLSELPHDLLRNIFNRLSFADFHRATWNSISKQTAPPKTKSPWLILFPDEGVHGCVLYNPDEDRIYKSVRDFSGTIFLANSGNWFLVMDSKSNLYIIDVFSENRIDLPPLESLLSDNFTFEQKGDKELKWQASNDQILVFRLPRAEELRGILWVDEKMKEFVAVWFLEDSCNFLAFYKKADDHYSHIQLEYVITDVFQSVSDIVLHGCFLYIGVGDYIQIIDLSKDQGFKDVTRNYLFNVHNGPWGFRSIFNLVVTTSGEVLMVLNNLYEKNIESEKSFRIFKKDPNPDPNKHDNLLVEVDSLGNEEVMLLDLGITMHGIEPNSIYFTRHDRVVHRLYIS.

The F-box domain maps to 6–52; that stretch reads PLTLSELPHDLLRNIFNRLSFADFHRATWNSISKQTAPPKTKSPWLI.

This Arabidopsis thaliana (Mouse-ear cress) protein is F-box protein At2g14500.